Consider the following 43-residue polypeptide: METAALVAISISRLLVSFTGYALYTAFGQPSEQLRDPFEEHED.

A helical transmembrane segment spans residues 5–27 (ALVAISISRLLVSFTGYALYTAF).

The protein belongs to the PsbN family.

Its subcellular location is the plastid. The protein localises to the chloroplast thylakoid membrane. May play a role in photosystem I and II biogenesis. This Bowenia serrulata (Byfield fern) protein is Protein PsbN.